A 477-amino-acid polypeptide reads, in one-letter code: MSKKLHIKTWGCQMNEYDSSKMADLLDASNGYTLTEEPEEADVLLLNTCSIREKAQEKVFHQLGRWKKLKANKPGLVIGVGGCVASQEGENIRSRAPYVDIVFGPQTLHRLPAMIKQVQEGRGAQVDIAFPEIEKFDSLPEPRAEGATAFVSIMEGCSKYCSFCVVPYTRGEEVSRPMDDVLYEIAQLAEQGVREVNLLGQNVNAYRGPTFDGSICSFAELLRLVAAIDGIDRIRYTTSHPIEFTDDIIEVYKDTPEVVSFLHLPVQSGSDRILTMMKRPHTVLEYKSKIRRLRAARPDITISSDFIVGFPNETDEDFEATMKLIEEINFDMSFSFIYSPRPGTPAADMPDDVDMEVKKVRLARLQHVINNQSMQIGRAMLGSTQRILVEGPSRLDPMQLCGRTENNRVVNFEGAHTLIGGFADVEITEVRPNSLRGRFIRGEDEMNLRIATAPREILARRPDNVPDALGVAAFTPH.

An MTTase N-terminal domain is found at 3 to 120 (KKLHIKTWGC…LPAMIKQVQE (118 aa)). [4Fe-4S] cluster is bound by residues C12, C49, C83, C157, C161, and C164. One can recognise a Radical SAM core domain in the interval 143-375 (RAEGATAFVS…QHVINNQSMQ (233 aa)). Positions 378–441 (RAMLGSTQRI…PNSLRGRFIR (64 aa)) constitute a TRAM domain.

Belongs to the methylthiotransferase family. MiaB subfamily. Monomer. It depends on [4Fe-4S] cluster as a cofactor.

The protein localises to the cytoplasm. The catalysed reaction is N(6)-dimethylallyladenosine(37) in tRNA + (sulfur carrier)-SH + AH2 + 2 S-adenosyl-L-methionine = 2-methylsulfanyl-N(6)-dimethylallyladenosine(37) in tRNA + (sulfur carrier)-H + 5'-deoxyadenosine + L-methionine + A + S-adenosyl-L-homocysteine + 2 H(+). Catalyzes the methylthiolation of N6-(dimethylallyl)adenosine (i(6)A), leading to the formation of 2-methylthio-N6-(dimethylallyl)adenosine (ms(2)i(6)A) at position 37 in tRNAs that read codons beginning with uridine. The polypeptide is tRNA-2-methylthio-N(6)-dimethylallyladenosine synthase (Aeromonas salmonicida (strain A449)).